Consider the following 732-residue polypeptide: Putative pectinesterase/pectinesterase inhibitor 28 (732 aa).

Residues 17-37 (VIISISSVLLISMVVAVTIGV) traverse the membrane as a helical segment. N-linked (GlcNAc...) asparagine glycans are attached at residues Asn-40, Asn-93, Asn-278, and Asn-297. The segment at 51–204 (TTSVKAIKDV…VQLTHNGLAM (154 aa)) is pectinesterase inhibitor 28. The interval 252–548 (DIVVAQDGSG…FTPAQYIQGD (297 aa)) is pectinesterase 28. Residues Thr-327 and Gln-357 each coordinate substrate. Asp-380 functions as the Proton donor; for pectinesterase activity in the catalytic mechanism. Cys-394 and Cys-414 are disulfide-bonded. Asp-401 functions as the Nucleophile; for pectinesterase activity in the catalytic mechanism. The N-linked (GlcNAc...) asparagine glycan is linked to Asn-413. Arg-469 and Trp-471 together coordinate substrate. 3 N-linked (GlcNAc...) asparagine glycosylation sites follow: Asn-566, Asn-570, and Asn-581. 2 stretches are compositionally biased toward low complexity: residues 570 to 620 (NSTV…PSTS) and 633 to 732 (PSMV…SSIG). The tract at residues 570–732 (NSTVTGSSLS…PSASPQSSIG (163 aa)) is disordered.

It in the N-terminal section; belongs to the PMEI family. The protein in the C-terminal section; belongs to the pectinesterase family. As to expression, expressed in flower buds.

The protein resides in the membrane. The enzyme catalyses [(1-&gt;4)-alpha-D-galacturonosyl methyl ester](n) + n H2O = [(1-&gt;4)-alpha-D-galacturonosyl](n) + n methanol + n H(+). Its pathway is glycan metabolism; pectin degradation; 2-dehydro-3-deoxy-D-gluconate from pectin: step 1/5. Its function is as follows. Acts in the modification of cell walls via demethylesterification of cell wall pectin. The protein is Putative pectinesterase/pectinesterase inhibitor 28 (PME28) of Arabidopsis thaliana (Mouse-ear cress).